The sequence spans 406 residues: 3-oxoacyl-[acyl-carrier-protein] synthase 1 (406 aa).

A Ketosynthase family 3 (KS3) domain is found at 1–403 (MRRTVITGFG…GTNATLIFKR (403 aa)). Active-site for beta-ketoacyl synthase activity residues include Cys162, His297, and His332.

Belongs to the thiolase-like superfamily. Beta-ketoacyl-ACP synthases family. As to quaternary structure, homodimer.

The protein localises to the cytoplasm. The catalysed reaction is a fatty acyl-[ACP] + malonyl-[ACP] + H(+) = a 3-oxoacyl-[ACP] + holo-[ACP] + CO2. It catalyses the reaction (3Z)-decenoyl-[ACP] + malonyl-[ACP] + H(+) = 3-oxo-(5Z)-dodecenoyl-[ACP] + holo-[ACP] + CO2. The protein operates within lipid metabolism; fatty acid biosynthesis. Involved in the type II fatty acid elongation cycle. Catalyzes the elongation of a wide range of acyl-ACP by the addition of two carbons from malonyl-ACP to an acyl acceptor. Can also use unsaturated fatty acids. Catalyzes a key reaction in unsaturated fatty acid (UFA) synthesis, the elongation of the cis-3-decenoyl-ACP produced by FabA. The sequence is that of 3-oxoacyl-[acyl-carrier-protein] synthase 1 (fabB) from Haemophilus influenzae (strain ATCC 51907 / DSM 11121 / KW20 / Rd).